The following is a 322-amino-acid chain: MCIIADSVKNVSNTKIASFHVAYSVDNNKNMIPSQLIVYAAKIDSTVSSNAIILPVYNPGNDSSKIIPLDLSNFSDFFDKLSTIYGRWFIDDNKIQALSYRNGQISVTNSILQVYTVGDYRFSIMPSKKYFNNLDKSQLNVDPRSKISIDQHNNDYSFIVFQFYQKGVIDITPFGYLCPTNSTSQIVPTIHGHPENNDFMPMDMGINISRMQVFSSIDQFNTPIGGRHNNNFENEAEFDHEIYLLVKDTISAGKSTTQDVIDINNLLKKITHDYANNQIRLFVPKNFIPGKIKITGKKPNRNIFVGPNNYRFMNDLLIDNQK.

This is an uncharacterized protein from Acanthamoeba polyphaga mimivirus (APMV).